A 167-amino-acid chain; its full sequence is Phosphopantetheine adenylyltransferase (167 aa).

Ser10 provides a ligand contact to substrate. ATP-binding positions include 10-11 (SF) and His18. Positions 42, 79, and 93 each coordinate substrate. ATP-binding positions include 94–96 (GLR), Glu104, and 129–135 (VRHITAT).

Belongs to the bacterial CoaD family. Homohexamer. It depends on Mg(2+) as a cofactor.

The protein resides in the cytoplasm. It carries out the reaction (R)-4'-phosphopantetheine + ATP + H(+) = 3'-dephospho-CoA + diphosphate. It functions in the pathway cofactor biosynthesis; coenzyme A biosynthesis; CoA from (R)-pantothenate: step 4/5. Functionally, reversibly transfers an adenylyl group from ATP to 4'-phosphopantetheine, yielding dephospho-CoA (dPCoA) and pyrophosphate. In Beijerinckia indica subsp. indica (strain ATCC 9039 / DSM 1715 / NCIMB 8712), this protein is Phosphopantetheine adenylyltransferase.